Reading from the N-terminus, the 431-residue chain is STE20-related kinase adapter protein alpha (431 aa).

Residues Ser2 and Ser46 each carry the phosphoserine modification. Disordered regions lie at residues 32–52 and 314–344; these read EQPP…SIAS and PSRS…SHPY. The 311-residue stretch at 69–379 folds into the Protein kinase domain; it reads YELLTIIGKG…ASTLLNHSFF (311 aa). Phosphothreonine; by LKB1 is present on Thr419.

The protein belongs to the protein kinase superfamily. STE Ser/Thr protein kinase family. STE20 subfamily. In terms of assembly, component of a trimeric complex composed of STK11/LKB1, STRAD (STRADA or STRADB) and CAB39/MO25 (CAB39/MO25alpha or CAB39L/MO25beta): the complex tethers STK11/LKB1 in the cytoplasm and stimulates its catalytic activity.

It is found in the nucleus. It localises to the cytoplasm. Pseudokinase which, in complex with CAB39/MO25 (CAB39/MO25alpha or CAB39L/MO25beta), binds to and activates STK11/LKB1. Adopts a closed conformation typical of active protein kinases and binds STK11/LKB1 as a pseudosubstrate, promoting conformational change of STK11/LKB1 in an active conformation. This is STE20-related kinase adapter protein alpha (Strada) from Mus musculus (Mouse).